The primary structure comprises 245 residues: Geranylgeranylglyceryl phosphate synthase (245 aa).

Residues D20 and S50 each contribute to the Mg(2+) site. Sn-glycerol 1-phosphate is bound by residues 169–175 (YLEAGSG), 202–203 (GG), and 224–225 (GT).

The protein belongs to the GGGP/HepGP synthase family. Group II subfamily. The cofactor is Mg(2+).

The protein resides in the cytoplasm. The enzyme catalyses sn-glycerol 1-phosphate + (2E,6E,10E)-geranylgeranyl diphosphate = sn-3-O-(geranylgeranyl)glycerol 1-phosphate + diphosphate. It functions in the pathway membrane lipid metabolism; glycerophospholipid metabolism. Prenyltransferase that catalyzes the transfer of the geranylgeranyl moiety of geranylgeranyl diphosphate (GGPP) to the C3 hydroxyl of sn-glycerol-1-phosphate (G1P). This reaction is the first ether-bond-formation step in the biosynthesis of archaeal membrane lipids. In Ignicoccus hospitalis (strain KIN4/I / DSM 18386 / JCM 14125), this protein is Geranylgeranylglyceryl phosphate synthase.